Here is a 701-residue protein sequence, read N- to C-terminus: MAQAGVVGEVTQVLCAAGGALELPELRRRLRMGLSADALERLLRQRGRFVVAVRAGGAAAAPERVVLAASPLRLCRAHQGSKPGCVGLCAQLHLCRFMVYGACKFLRAGKNCRNSHSLTTEHNLSVLRTHGVDHLSYNELCQLLFQNDPWLLPEICQHYNKGDGPHGSCAFQKQCIKLHICQYFLQGECKFGTSCKRSHDFSNSENLEKLEKLGMSSDLVSRLPTIYRNAHDIKNKSSAPSRVPPLFVPQGTSERKDSSGSVSPNTLSQEEGDQICLYHIRKSCSFQDKCHRVHFHLPYRWQFLDRGKWEDLDNMELIEEAYCNPKIERILCSESASTFHSHCLNFNAMTYGATQARRLSTASSVTKPPHFILTTDWIWYWSDEFGSWQEYGRQGTVHPVTTVSSSDVEKAYLAYCTPGSDGQAATLKFQAGKHNYELDFKAFVQKNLVYGTTKKVCRRPKYVSPQDVTTMQTCNTKFPGPKSIPDYWDSSALPDPGFQKITLSSSSEEYQKVWNLFNRTLPFYFVQKIERVQNLALWEVYQWQKGQMQKQNGGKAVDERQLFHGTSAIFVDAICQQNFDWRVCGVHGTSYGKGSYFARDAAYSHHYSKSDTQTHTMFLARVLVGEFVRGNASFVRPPAKEGWSNAFYDSCVNSVSDPSIFVIFEKHQVYPEYVIQYTTSSKPSVTPSILLALGSLFSSRQ.

C3H1-type zinc fingers lie at residues 94 to 119, 150 to 179, and 180 to 202; these read LCRF…HSLT, WLLP…IKLH, and ICQY…HDFS. Residues 234-268 are disordered; it reads KNKSSAPSRVPPLFVPQGTSERKDSSGSVSPNTLS. The residue at position 258 (Ser258) is a Phosphoserine. Polar residues predominate over residues 259–268; sequence SGSVSPNTLS. C3H1-type zinc fingers lie at residues 270–297 and 271–296; these read EEGD…HFHL and EGDQ…VHFH. 2 consecutive WWE domains span residues 298–361 and 364–458; these read PYRW…RLST and SVTK…KVCR. Cys474 bears the ADP-ribosylcysteine mark. Residues 484-698 form the PARP catalytic domain; it reads IPDYWDSSAL…ILLALGSLFS (215 aa). ADP-ribosyl aspartic acid occurs at positions 600 and 611.

It belongs to the ARTD/PARP family. In terms of assembly, interacts with PARP11; this interaction plays a key role in zika virus suppression. Interacts with ISG15. In terms of processing, auto-mono-ADP-ribosylated. Post-translationally, phosphorylated by PRKD1.

It localises to the nucleus. The protein resides in the golgi apparatus. The protein localises to the trans-Golgi network. Its subcellular location is the cytoplasm. It is found in the stress granule. It carries out the reaction L-aspartyl-[protein] + NAD(+) = 4-O-(ADP-D-ribosyl)-L-aspartyl-[protein] + nicotinamide. The catalysed reaction is L-cysteinyl-[protein] + NAD(+) = S-(ADP-D-ribosyl)-L-cysteinyl-[protein] + nicotinamide + H(+). Mono-ADP-ribosyltransferase that mediates mono-ADP-ribosylation of target proteins. Acts as an antiviral factor by cooperating with PARP11 to suppress Zika virus replication. Displays anti-alphavirus activity during IFN-gamma immune activation by directly ADP-ribosylating the alphaviral non-structural proteins nsP3 and nsP4. Acts as a component of the PRKD1-driven regulatory cascade that selectively controls a major branch of the basolateral transport pathway by catalyzing the MARylation of GOLGA1. Acts also as a key regulator of mitochondrial function, protein translation, and inflammation. Inhibits PINK1/Parkin-dependent mitophagy and promotes cartilage degeneration by inhibiting the ubiquitination and SUMOylation of MFN1/2 by upregulating ISG15 and ISGylation. In Homo sapiens (Human), this protein is Protein mono-ADP-ribosyltransferase PARP12.